Reading from the N-terminus, the 360-residue chain is Fructose import permease protein FrcC (360 aa).

9 consecutive transmembrane segments (helical) span residues 48–68 (AAVPLIVLVLSLIAFGVILGG), 84–106 (AIVGIVGAAQTLVILTAGIDLSV), 125–145 (GFPPALSVICGLGVGALCGYI), 155–175 (LPPFIVTLGMWQIVLASNFLY), 205–225 (AVFTYGVVVMVLLVCLLWYVL), 254–274 (MLISIYTLSGLICALAGWALI), 284–304 (AGQFANIESITAVVIGGISLF), 310–330 (IMGMLFGALIVGVFSLGLRLM), and 335–355 (QWTYLLIGLLIIIAVAIDQWI).

It belongs to the binding-protein-dependent transport system permease family. The complex is composed of two ATP-binding proteins (FrcA), two transmembrane proteins (FrcC) and a solute-binding protein (FrcB).

It is found in the cell inner membrane. Part of the high-affinity ABC transporter complex FrcBCA involved in fructose uptake. Is also a high-affinity transporter for ribose and mannose. Responsible for the translocation of the substrate across the membrane. The chain is Fructose import permease protein FrcC from Rhizobium meliloti (Ensifer meliloti).